The chain runs to 254 residues: MRVLLSNDDGVHAAGLKALADAFHGDEVWVVAPDREQSASSHAISLHRPLRLLEVAPRWYAVDGTPTDAVYMGLNLVLRDARPDVVVSGVNHGPNLGNDVLYSGTVAAAMEGALLGVNAVAVSLAAPPPHDFGEAARFAAALARQVVARPPPAPVLLNVNVPPGPVRGYRFARLGRRTYGNEVVEKTDPRGRKYYWIGGEGRVHNEDIPGSDCNTVLLERLAAVTPLHLDGTHDPMFQELRSWTVPGYEKEPAP.

A divalent metal cation contacts are provided by Asp-8, Asp-9, Ser-38, and Asn-91.

This sequence belongs to the SurE nucleotidase family. A divalent metal cation is required as a cofactor.

It localises to the cytoplasm. It carries out the reaction a ribonucleoside 5'-phosphate + H2O = a ribonucleoside + phosphate. Functionally, nucleotidase that shows phosphatase activity on nucleoside 5'-monophosphates. The chain is 5'-nucleotidase SurE from Anaeromyxobacter sp. (strain K).